A 208-amino-acid chain; its full sequence is Predicted GPI-anchored protein 37 (208 aa).

Residues 1–18 form the signal peptide; it reads MLFTQLIILLTVTSQALS. A disordered region spans residues 33-93; the sequence is TKRLGGGSRG…SSSSSGSRNW (61 aa). Residues 36 to 53 show a composition bias toward gly residues; it reads LGGGSRGGSSSGSRGGSS. Residues 54–63 are compositionally biased toward low complexity; that stretch reads SGSSSGSSSG. N-linked (GlcNAc...) asparagine glycosylation is present at Asn173. Residue Ser185 is the site of GPI-anchor amidated serine attachment. The propeptide at 186-208 is removed in mature form; that stretch reads SSLNIPSTHFYLIGFAAAYSIVL.

Belongs to the PGA37 family.

The protein localises to the cell membrane. Its function is as follows. Predicted GPI-anchored protein which may have a role during host infection. This chain is Predicted GPI-anchored protein 37 (PGA37), found in Candida albicans (strain SC5314 / ATCC MYA-2876) (Yeast).